The sequence spans 331 residues: Phosphoribosylformylglycinamidine cyclo-ligase (331 aa).

Belongs to the AIR synthase family.

The protein localises to the cytoplasm. It catalyses the reaction 2-formamido-N(1)-(5-O-phospho-beta-D-ribosyl)acetamidine + ATP = 5-amino-1-(5-phospho-beta-D-ribosyl)imidazole + ADP + phosphate + H(+). It participates in purine metabolism; IMP biosynthesis via de novo pathway; 5-amino-1-(5-phospho-D-ribosyl)imidazole from N(2)-formyl-N(1)-(5-phospho-D-ribosyl)glycinamide: step 2/2. The protein is Phosphoribosylformylglycinamidine cyclo-ligase of Clostridium botulinum (strain Langeland / NCTC 10281 / Type F).